Here is a 376-residue protein sequence, read N- to C-terminus: MYG1 exonuclease (376 aa).

A mitochondrion-targeting transit peptide spans 1–47 (MGHRFLRGLLTLLLPPPPLYTRHRMLGPESVPPPKRSRSKLMAPPRI). Residue S120 is modified to Phosphoserine. An N6-acetyllysine mark is found at K267 and K273.

The protein belongs to the MYG1 family. In terms of tissue distribution, ubiquitously expressed, with highest levels in testis.

Its subcellular location is the nucleus. It localises to the nucleoplasm. The protein localises to the mitochondrion matrix. It is found in the nucleolus. In terms of biological role, 3'-5' RNA exonuclease which cleaves in situ on specific transcripts in both nucleus and mitochondrion. Involved in regulating spatially segregated organellar RNA processing, acts as a coordinator of nucleo-mitochondrial crosstalk. In nucleolus, processes pre-ribosomal RNA involved in ribosome assembly and alters cytoplasmic translation. In mitochondrial matrix, processes 3'-termini of the mito-ribosomal and messenger RNAs and controls translation of mitochondrial proteins. The chain is MYG1 exonuclease from Homo sapiens (Human).